Reading from the N-terminus, the 1372-residue chain is Capping protein, Arp2/3 and myosin-I linker protein 3 (1372 aa).

The interval 126 to 151 (RGNADTPEGPRDTSPNSETSTSTTHS) is disordered. The segment covering 138–151 (TSPNSETSTSTTHS) has biased composition (low complexity). LRR repeat units follow at residues 244-264 (SLEE…QKLA), 274-295 (VLHA…SLSQ), 303-323 (GLTK…QALG), 335-357 (SLRY…NALY), 365-385 (ALVH…LGAL), 392-413 (HLTY…EAPP), 424-444 (TLSH…RALL), 455-475 (DLHL…ALQE), 482-501 (CVGS…LTLV), and 509-530 (SLKH…EEIL). 3 disordered regions span residues 865 to 900 (TLSD…ELGT), 970 to 1003 (KLRH…RQEN), and 1024 to 1372 (ESSS…PGTD). Positions 982-995 (PRTTPPGPGRPSMP) are enriched in pro residues. Residues 1040–1073 (SEAPLPPLQKKRRRGLFHFRRPRSFKGDRGPGSP) are necessary for localization at the cell membrane. The span at 1048–1063 (QKKRRRGLFHFRRPRS) shows a compositional bias: basic residues. A compositionally biased stretch (pro residues) spans 1079–1098 (LPPPPPPPPTQESPPSPDPP). Residues 1099 to 1109 (SLGNNSSPCWS) show a composition bias toward low complexity. Composition is skewed to basic and acidic residues over residues 1163–1177 (ERAK…REGP) and 1219–1229 (RRAEATWHIAE). The segment covering 1233 to 1244 (PNHSCQSPSPAS) has biased composition (polar residues). Positions 1348-1361 (QSCDKLEPDRRRPP) are enriched in basic and acidic residues.

Belongs to the CARMIL family. As to expression, widely expressed, with much higher levels in fetal tissues than in adult ones. Up-regulated in certain cancer tissues.

The protein localises to the cytoplasm. It localises to the cell membrane. The sequence is that of Capping protein, Arp2/3 and myosin-I linker protein 3 from Homo sapiens (Human).